Reading from the N-terminus, the 103-residue chain is Small ribosomal subunit protein uS10 (103 aa).

This sequence belongs to the universal ribosomal protein uS10 family. In terms of assembly, part of the 30S ribosomal subunit.

Functionally, involved in the binding of tRNA to the ribosomes. The polypeptide is Small ribosomal subunit protein uS10 (Ruminiclostridium cellulolyticum (strain ATCC 35319 / DSM 5812 / JCM 6584 / H10) (Clostridium cellulolyticum)).